We begin with the raw amino-acid sequence, 802 residues long: Bifunctional purine biosynthetic protein ADE5,7 (802 aa).

The tract at residues 1 to 444 (MPEITAFPQP…FRRDIAYRAL (444 aa)) is GARS. The ATP-grasp domain occupies 126–339 (KEFMARHNIP…LAEVLLACVE (214 aa)). 157–218 (KPFTSGRSVI…EEYLSGPEIS (62 aa)) is an ATP binding site. Glutamate 307 and asparagine 309 together coordinate Mg(2+). Residues 455-788 (LTYAAAGVSV…EAWVIGEVQE (334 aa)) form an AIRS region.

In the N-terminal section; belongs to the GARS family. The protein in the C-terminal section; belongs to the AIR synthase family. As to quaternary structure, homodimer. It depends on Mg(2+) as a cofactor. Mn(2+) serves as cofactor.

It is found in the cytoplasm. The protein localises to the cytosol. It catalyses the reaction 2-formamido-N(1)-(5-O-phospho-beta-D-ribosyl)acetamidine + ATP = 5-amino-1-(5-phospho-beta-D-ribosyl)imidazole + ADP + phosphate + H(+). The enzyme catalyses 5-phospho-beta-D-ribosylamine + glycine + ATP = N(1)-(5-phospho-beta-D-ribosyl)glycinamide + ADP + phosphate + H(+). Its pathway is purine metabolism; IMP biosynthesis via de novo pathway; 5-amino-1-(5-phospho-D-ribosyl)imidazole from N(2)-formyl-N(1)-(5-phospho-D-ribosyl)glycinamide: step 2/2. It participates in purine metabolism; IMP biosynthesis via de novo pathway; N(1)-(5-phospho-D-ribosyl)glycinamide from 5-phospho-alpha-D-ribose 1-diphosphate: step 2/2. Catalyzes the second and fifth step in the 'de novo' purine biosynthesis pathway; contains phosphoribosylamine--glycine ligase (GARS) and phosphoribosylformylglycinamidine cyclo-ligase (AIRS) activities. The protein is Bifunctional purine biosynthetic protein ADE5,7 of Cryptococcus neoformans var. grubii serotype A (strain H99 / ATCC 208821 / CBS 10515 / FGSC 9487) (Filobasidiella neoformans var. grubii).